We begin with the raw amino-acid sequence, 275 residues long: MEMO1 family protein Nmar_0215 (275 aa).

It belongs to the MEMO1 family.

This Nitrosopumilus maritimus (strain SCM1) protein is MEMO1 family protein Nmar_0215.